We begin with the raw amino-acid sequence, 340 residues long: Spike protein P5 (340 aa).

The domain-1 stretch occupies residues 2-122 (ANQQIGGSTV…NFPIALGVWP (121 aa)). The Collagen-like domain occupies 123–141 (SGIKGDKGDPGAPGPAGGT). The interval 142 to 340 (VVVEDSGASF…IINITAAKIN (199 aa)) is domain-2.

Homotrimer.

It is found in the virion. In terms of biological role, in association with P31 and P2, forms the spike complexes located at the 5-fold vertices of the capsid. Essential for viral infectivity. The protein is Spike protein P5 (V) of Enterobacteria phage PRD1 (Bacteriophage PRD1).